A 304-amino-acid polypeptide reads, in one-letter code: MEPLIGMGVLALIGVAATIAGASEDLESDIGSQSNPNSQVQLAPQMMFPHRIFNKAISGEPPSNALMCSIGAAIATVLISEFTVSPLFALVFGSVIAASVHATFAVTATMGRCASQSRFKQPIYLDMIRSHTPAIMGYAFITTFCVLIVSYLMTVVLGHPFPLTMLAFIWGITIGAIGSSTGDVHYGAEREFQQFEFGSGLNASNSGNIVRYAESGLRNGFDNSWFCSKFGGPTTGIAFGMTVFLGSWITTIFDPAQGLSMGWLSVIAGVIIVLILIIWNWKIEVQARKAYGPYKEDKAEEASA.

6 consecutive transmembrane segments (helical) span residues 3 to 23 (PLIG…AGAS), 77 to 97 (VLIS…SVIA), 133 to 153 (PAIM…SYLM), 155 to 175 (VVLG…ITIG), 233 to 253 (PTTG…TTIF), and 259 to 279 (LSMG…LIIW).

The protein belongs to the MtrE family. The complex is composed of 8 subunits; MtrA, MtrB, MtrC, MtrD, MtrE, MtrF, MtrG and MtrH.

It localises to the cell membrane. It catalyses the reaction 5-methyl-5,6,7,8-tetrahydromethanopterin + coenzyme M + 2 Na(+)(in) = 5,6,7,8-tetrahydromethanopterin + methyl-coenzyme M + 2 Na(+)(out). It functions in the pathway one-carbon metabolism; methanogenesis from CO(2); methyl-coenzyme M from 5,10-methylene-5,6,7,8-tetrahydromethanopterin: step 2/2. Part of a complex that catalyzes the formation of methyl-coenzyme M and tetrahydromethanopterin from coenzyme M and methyl-tetrahydromethanopterin. This is an energy-conserving, sodium-ion translocating step. In Methanosarcina mazei (strain ATCC BAA-159 / DSM 3647 / Goe1 / Go1 / JCM 11833 / OCM 88) (Methanosarcina frisia), this protein is Tetrahydromethanopterin S-methyltransferase subunit E (mtrE).